The sequence spans 132 residues: Small ribosomal subunit protein uS8 (132 aa).

Belongs to the universal ribosomal protein uS8 family. As to quaternary structure, part of the 30S ribosomal subunit. Contacts proteins S5 and S12.

One of the primary rRNA binding proteins, it binds directly to 16S rRNA central domain where it helps coordinate assembly of the platform of the 30S subunit. The chain is Small ribosomal subunit protein uS8 from Rickettsia akari (strain Hartford).